The sequence spans 83 residues: Small ribosomal subunit protein bS16 (83 aa).

The protein belongs to the bacterial ribosomal protein bS16 family.

In Pseudomonas putida (strain ATCC 700007 / DSM 6899 / JCM 31910 / BCRC 17059 / LMG 24140 / F1), this protein is Small ribosomal subunit protein bS16.